The primary structure comprises 464 residues: MEFLPLFHNLRGSRVLVVGGGEIALRKSRLIADAGAVLRVVAPEIEAQLSELVVQSGGEMILRGYSECDLDGCVLIIAATDDEPLNAQVSRDARLRCVPVNVVDAPALCTVIFPAIVDRSPLVIAVSSGGDAPVLARLIRAKLETWIPSSYGQLAGLAARFRNQVKGLFPNVQQRRAFWEEVFQGAIADRQLAGQGAEAERMLIAKIAGEPPPETGEVYLVGAGPGDPDLLTFRALRLMQQADVVLYDRLVAPTILDLCRRDAERVYVGKRRAEHAVPQEQINQQLVALAKQGKRVVRLKGGDPFIFGRGGEEIEELAAHGIPFQVVPGITAASGCAAYAGIPLTHRDHAQSVRFITGHLKNGTTDLPWSDLVAPAQTLVFYMGLIGLPVICEQLIRHGRSADTPAALVEQGTTVNQRVFTGTLANLPQLVAEHDVHAPTLVIIGEVVKLREKLAWFEGAQATL.

Residues 1-203 (MEFLPLFHNL…GQGAEAERML (203 aa)) form a precorrin-2 dehydrogenase /sirohydrochlorin ferrochelatase region. NAD(+) is bound by residues 22 to 23 (EI) and 43 to 44 (PE). Phosphoserine is present on S128. Residues 216–464 (GEVYLVGAGP…AWFEGAQATL (249 aa)) form a uroporphyrinogen-III C-methyltransferase region. P225 contacts S-adenosyl-L-methionine. D248 functions as the Proton acceptor in the catalytic mechanism. The Proton donor role is filled by K270. Residues 301-303 (GGD), I306, 331-332 (TA), M383, and G412 each bind S-adenosyl-L-methionine.

The protein in the N-terminal section; belongs to the precorrin-2 dehydrogenase / sirohydrochlorin ferrochelatase family. It in the C-terminal section; belongs to the precorrin methyltransferase family.

The enzyme catalyses uroporphyrinogen III + 2 S-adenosyl-L-methionine = precorrin-2 + 2 S-adenosyl-L-homocysteine + H(+). It catalyses the reaction precorrin-2 + NAD(+) = sirohydrochlorin + NADH + 2 H(+). The catalysed reaction is siroheme + 2 H(+) = sirohydrochlorin + Fe(2+). It functions in the pathway cofactor biosynthesis; adenosylcobalamin biosynthesis; precorrin-2 from uroporphyrinogen III: step 1/1. Its pathway is cofactor biosynthesis; adenosylcobalamin biosynthesis; sirohydrochlorin from precorrin-2: step 1/1. It participates in porphyrin-containing compound metabolism; siroheme biosynthesis; precorrin-2 from uroporphyrinogen III: step 1/1. The protein operates within porphyrin-containing compound metabolism; siroheme biosynthesis; siroheme from sirohydrochlorin: step 1/1. It functions in the pathway porphyrin-containing compound metabolism; siroheme biosynthesis; sirohydrochlorin from precorrin-2: step 1/1. Multifunctional enzyme that catalyzes the SAM-dependent methylations of uroporphyrinogen III at position C-2 and C-7 to form precorrin-2 via precorrin-1. Then it catalyzes the NAD-dependent ring dehydrogenation of precorrin-2 to yield sirohydrochlorin. Finally, it catalyzes the ferrochelation of sirohydrochlorin to yield siroheme. The protein is Siroheme synthase of Pseudomonas syringae pv. syringae (strain B728a).